Consider the following 906-residue polypeptide: Rho GTPase-activating protein gacJ (906 aa).

Residues 53-117 (LEGHLNPSSH…RDNSRSDNIR (65 aa)) are disordered. The span at 69–79 (NNNNNNNNNNN) shows a compositional bias: low complexity. Basic and acidic residues predominate over residues 92 to 117 (SRSDSKHHNRENSKSDRDNSRSDNIR). Positions 161 to 348 (EELQSLYPDQ…YMLEYFNDIF (188 aa)) constitute a Rho-GAP domain. Disordered stretches follow at residues 368 to 415 (DTTS…SRSK), 452 to 864 (EIIP…SVLT), and 877 to 906 (ANQAKKNPLSNSGGLKQISPDLIKSNNINK). Residues 381 to 404 (NGGSPRTSNTPYQQQHQLSSQSMA) show a composition bias toward polar residues. The segment covering 461 to 487 (TTTTTTTTTNTTTTTTTTNTTPNNTTT) has biased composition (low complexity). Composition is skewed to pro residues over residues 494 to 510 (PVPPKPNLIPRKLPPNP) and 547 to 560 (QPPPPRKPTSPSPP). A compositionally biased stretch (polar residues) spans 565 to 574 (KPTSKSDFIP). 2 stretches are compositionally biased toward low complexity: residues 575 to 597 (STNNNLNNNNTTTTTSSLISIPK) and 613 to 629 (IEEPINPNLNINSTTTT). The span at 637–649 (FKNNGTISSGSKS) shows a compositional bias: polar residues. 2 stretches are compositionally biased toward low complexity: residues 650–663 (NPNLQNLLNTNQPL) and 683–694 (SKPITTTPTIKK). Residues 708–721 (PPSPSSSSPSPPHN) show a composition bias toward pro residues. Composition is skewed to low complexity over residues 754-772 (PTIPTQTTTASSSSTPTTP), 785-816 (PPINTSQTNNNISNSSIPSPKSKSALSLSTPK), and 844-861 (SSPTSSSPLQSPKISSPS). A compositionally biased stretch (polar residues) spans 880–890 (AKKNPLSNSGG).

Its subcellular location is the cytoplasm. In terms of biological role, rho GTPase-activating protein involved in the signal transduction pathway. This is Rho GTPase-activating protein gacJ (gacJ) from Dictyostelium discoideum (Social amoeba).